The sequence spans 250 residues: Ribosomal RNA small subunit methyltransferase G (250 aa).

S-adenosyl-L-methionine is bound by residues G78, L83, 129 to 130 (AE), and R144. Residues 224–250 (IAAPRKRGGQQRRAGHARGTSNRRRGT) are disordered. A compositionally biased stretch (basic residues) spans 227 to 250 (PRKRGGQQRRAGHARGTSNRRRGT).

Belongs to the methyltransferase superfamily. RNA methyltransferase RsmG family.

It localises to the cytoplasm. Its function is as follows. Specifically methylates the N7 position of guanine in position 518 of 16S rRNA. In Nocardioides sp. (strain ATCC BAA-499 / JS614), this protein is Ribosomal RNA small subunit methyltransferase G.